A 245-amino-acid polypeptide reads, in one-letter code: Orotidine 5'-phosphate decarboxylase (245 aa).

Residues aspartate 22, lysine 44, 71-80, threonine 131, arginine 192, glutamine 201, glycine 221, and arginine 222 each bind substrate; that span reads DLKFHDIPNT. The Proton donor role is filled by lysine 73.

It belongs to the OMP decarboxylase family. Type 1 subfamily. As to quaternary structure, homodimer.

The catalysed reaction is orotidine 5'-phosphate + H(+) = UMP + CO2. The protein operates within pyrimidine metabolism; UMP biosynthesis via de novo pathway; UMP from orotate: step 2/2. In terms of biological role, catalyzes the decarboxylation of orotidine 5'-monophosphate (OMP) to uridine 5'-monophosphate (UMP). The polypeptide is Orotidine 5'-phosphate decarboxylase (Escherichia coli O127:H6 (strain E2348/69 / EPEC)).